The chain runs to 178 residues: MALKELFDRDWQELESEGVLFSTLEKLVAWGRSNSLWPATFGLACCAIEMMSSTDGRNDLSRFGSEVFRASPRQADVMIVAGRLSKKMAPIMRRVYDQMPDPKWVISMGACASSGGMFNNYAVVQNVDHVVPVDVFVPGCPPRPEALIYAVMQLQKKVRGEAYDARGEQLPMVEAWTR.

[4Fe-4S] cluster contacts are provided by Cys45, Cys46, Cys111, and Cys140.

Belongs to the complex I 20 kDa subunit family. NDH-1 is composed of 15 different subunits. Subunits NuoB, C, D, E, F, and G constitute the peripheral sector of the complex. It depends on [4Fe-4S] cluster as a cofactor.

The protein localises to the cell membrane. The catalysed reaction is a quinone + NADH + 5 H(+)(in) = a quinol + NAD(+) + 4 H(+)(out). Functionally, NDH-1 shuttles electrons from NADH, via FMN and iron-sulfur (Fe-S) centers, to quinones in the respiratory chain. The immediate electron acceptor for the enzyme in this species is believed to be a menaquinone. Couples the redox reaction to proton translocation (for every two electrons transferred, four hydrogen ions are translocated across the cytoplasmic membrane), and thus conserves the redox energy in a proton gradient. In Deinococcus geothermalis (strain DSM 11300 / CIP 105573 / AG-3a), this protein is NADH-quinone oxidoreductase subunit B.